We begin with the raw amino-acid sequence, 361 residues long: Peptide chain release factor 1 (361 aa).

Position 233 is an N5-methylglutamine (glutamine 233). Basic and acidic residues predominate over residues 280 to 293; that stretch reads ERRKKEQERADSRR. A disordered region spans residues 280 to 307; that stretch reads ERRKKEQERADSRRGQVGSGDRSERIRT.

It belongs to the prokaryotic/mitochondrial release factor family. Post-translationally, methylated by PrmC. Methylation increases the termination efficiency of RF1.

It is found in the cytoplasm. Its function is as follows. Peptide chain release factor 1 directs the termination of translation in response to the peptide chain termination codons UAG and UAA. In Rickettsia massiliae (strain Mtu5), this protein is Peptide chain release factor 1.